Reading from the N-terminus, the 173-residue chain is Co-chaperone protein HscB homolog (173 aa).

The J domain maps to C5–L77.

The protein belongs to the HscB family. As to quaternary structure, interacts with HscA and stimulates its ATPase activity.

Co-chaperone involved in the maturation of iron-sulfur cluster-containing proteins. Seems to help targeting proteins to be folded toward HscA. This is Co-chaperone protein HscB homolog from Pseudomonas aeruginosa (strain UCBPP-PA14).